The chain runs to 134 residues: Large ribosomal subunit protein uL18 (134 aa).

This sequence belongs to the universal ribosomal protein uL18 family. In terms of assembly, part of the 50S ribosomal subunit; part of the 5S rRNA/L5/L18/L25 subcomplex. Contacts the 5S and 23S rRNAs.

Functionally, this is one of the proteins that bind and probably mediate the attachment of the 5S RNA into the large ribosomal subunit, where it forms part of the central protuberance. The chain is Large ribosomal subunit protein uL18 from Corynebacterium glutamicum (strain ATCC 13032 / DSM 20300 / JCM 1318 / BCRC 11384 / CCUG 27702 / LMG 3730 / NBRC 12168 / NCIMB 10025 / NRRL B-2784 / 534).